Reading from the N-terminus, the 400-residue chain is Argininosuccinate synthase (400 aa).

ATP contacts are provided by residues alanine 6–serine 14 and alanine 33. Positions 84 and 89 each coordinate L-citrulline. Glycine 114 is a binding site for ATP. Residues threonine 116, asparagine 120, and aspartate 121 each coordinate L-aspartate. Asparagine 120 lines the L-citrulline pocket. The L-citrulline site is built by arginine 124, serine 173, serine 182, glutamate 258, and tyrosine 270.

This sequence belongs to the argininosuccinate synthase family. Type 1 subfamily. In terms of assembly, homotetramer.

The protein localises to the cytoplasm. The catalysed reaction is L-citrulline + L-aspartate + ATP = 2-(N(omega)-L-arginino)succinate + AMP + diphosphate + H(+). It functions in the pathway amino-acid biosynthesis; L-arginine biosynthesis; L-arginine from L-ornithine and carbamoyl phosphate: step 2/3. The polypeptide is Argininosuccinate synthase (Thermus thermophilus (strain ATCC BAA-163 / DSM 7039 / HB27)).